The sequence spans 434 residues: Tol-Pal system protein TolB (434 aa).

Residues 1–28 form the signal peptide; sequence MQQTCKRKIWMQISVALVTSLWMISAQA.

This sequence belongs to the TolB family. As to quaternary structure, the Tol-Pal system is composed of five core proteins: the inner membrane proteins TolA, TolQ and TolR, the periplasmic protein TolB and the outer membrane protein Pal. They form a network linking the inner and outer membranes and the peptidoglycan layer.

It is found in the periplasm. Its function is as follows. Part of the Tol-Pal system, which plays a role in outer membrane invagination during cell division and is important for maintaining outer membrane integrity. The protein is Tol-Pal system protein TolB of Alcanivorax borkumensis (strain ATCC 700651 / DSM 11573 / NCIMB 13689 / SK2).